Reading from the N-terminus, the 250-residue chain is Probable cytokinin riboside 5'-monophosphate phosphoribohydrolase LOGL6 (250 aa).

Substrate is bound by residues Glu-98, 116 to 117 (RK), and 133 to 139 (GYGTLEE).

The protein belongs to the LOG family. In terms of tissue distribution, expressed in roots, leaves, stems, tiller buds, shoot apex, immature inflorescences and flowers.

The enzyme catalyses N(6)-(dimethylallyl)adenosine 5'-phosphate + H2O = N(6)-dimethylallyladenine + D-ribose 5-phosphate. The catalysed reaction is 9-ribosyl-trans-zeatin 5'-phosphate + H2O = trans-zeatin + D-ribose 5-phosphate. Cytokinin-activating enzyme working in the direct activation pathway. Phosphoribohydrolase that converts inactive cytokinin nucleotides to the biologically active free-base forms. The protein is Probable cytokinin riboside 5'-monophosphate phosphoribohydrolase LOGL6 (LOGL6) of Oryza sativa subsp. japonica (Rice).